The following is a 226-amino-acid chain: Membrane protein (226 aa).

Over 1 to 11 (MSNGSIPVDEV) the chain is Virion surface. The chain crosses the membrane as a helical span at residues 12–32 (IEHLRNWNFTWNIILTILLVV). Residues 33 to 41 (LQYGHYKYS) are Intravirion-facing. A helical transmembrane segment spans residues 42–62 (VFLYGVKMAILWILWPLVLAL). Topologically, residues 63–75 (SLFDAWASFQVNW) are virion surface. Residues 76–96 (VFFAFSILMACITLMLWIMYF) traverse the membrane as a helical segment. Residues 97–226 (VNSIRLWRRT…TDSEKVPHLV (130 aa)) are Intravirion-facing. The interaction with N protein stretch occupies residues 200 to 216 (RSKHGDYSAVSNPSAVL).

It belongs to the alphacoronaviruses M protein family. Homomultimer. Interacts with envelope E protein in the budding compartment of the host cell, which is located between endoplasmic reticulum and the Golgi complex. Forms a complex with HE and S proteins. Interacts with nucleocapsid N protein. This interaction probably participates in RNA packaging into the virus.

It is found in the virion membrane. It localises to the host Golgi apparatus membrane. Functionally, component of the viral envelope that plays a central role in virus morphogenesis and assembly via its interactions with other viral proteins. The polypeptide is Membrane protein (Sus scrofa (Pig)).